A 60-amino-acid polypeptide reads, in one-letter code: MTKEAKVKVQLVRSPIGTKESHRATVRGLGLRGVNSVSELQDTPAVRGMINKISYLVKVI.

The protein belongs to the universal ribosomal protein uL30 family. In terms of assembly, part of the 50S ribosomal subunit.

This Polaromonas sp. (strain JS666 / ATCC BAA-500) protein is Large ribosomal subunit protein uL30.